Consider the following 260-residue polypeptide: UPF0246 protein Bcep18194_A5551 (260 aa).

It belongs to the UPF0246 family.

This chain is UPF0246 protein Bcep18194_A5551, found in Burkholderia lata (strain ATCC 17760 / DSM 23089 / LMG 22485 / NCIMB 9086 / R18194 / 383).